The chain runs to 404 residues: Inosine-5'-monophosphate dehydrogenase (404 aa).

NAD(+) is bound by residues D172 and 222 to 224 (GIG). The K(+) site is built by G224 and G226. S227 is an IMP binding site. C229 is a K(+) binding site. The Thioimidate intermediate role is filled by C229. Residues 262 to 264 (DGG), 285 to 286 (GN), and 309 to 313 (YVGMG) each bind IMP. Residue R325 is the Proton acceptor of the active site. E340 provides a ligand contact to IMP. Positions 394, 395, and 396 each coordinate K(+).

Belongs to the IMPDH/GMPR family. As to quaternary structure, homotetramer. The cofactor is K(+).

The catalysed reaction is IMP + NAD(+) + H2O = XMP + NADH + H(+). It participates in purine metabolism; XMP biosynthesis via de novo pathway; XMP from IMP: step 1/1. With respect to regulation, mycophenolic acid (MPA) is a non-competitive inhibitor that prevents formation of the closed enzyme conformation by binding to the same site as the amobile flap. In contrast, mizoribine monophosphate (MZP) is a competitive inhibitor that induces the closed conformation. MPA is a potent inhibitor of mammalian IMPDHs but a poor inhibitor of the bacterial enzymes. MZP is a more potent inhibitor of bacterial IMPDH. Catalyzes the conversion of inosine 5'-phosphate (IMP) to xanthosine 5'-phosphate (XMP), the first committed and rate-limiting step in the de novo synthesis of guanine nucleotides, and therefore plays an important role in the regulation of cell growth. Essential for mouse infection by tick bite and critical for the survival in environments that appear to lack sufficient amounts of guanine, guanosine, and/or deoxyguanosine to support spirochete growth, such as mammalian host tissues. In Borreliella burgdorferi (strain ATCC 35210 / DSM 4680 / CIP 102532 / B31) (Borrelia burgdorferi), this protein is Inosine-5'-monophosphate dehydrogenase.